We begin with the raw amino-acid sequence, 804 residues long: Leucine--tRNA ligase (804 aa).

Positions 39 to 50 match the 'HIGH' region motif; it reads PYPSGAGLHVGH. The 'KMSKS' region motif lies at 580–584; it reads KMSKS. Position 583 (Lys583) interacts with ATP.

It belongs to the class-I aminoacyl-tRNA synthetase family.

Its subcellular location is the cytoplasm. The enzyme catalyses tRNA(Leu) + L-leucine + ATP = L-leucyl-tRNA(Leu) + AMP + diphosphate. This is Leucine--tRNA ligase from Mycoplasma capricolum subsp. capricolum (strain California kid / ATCC 27343 / NCTC 10154).